The chain runs to 37 residues: 24 kDa antigen (37 aa).

The polypeptide is 24 kDa antigen (Plasmodium chabaudi).